Consider the following 252-residue polypeptide: tRNA pseudouridine synthase A (252 aa).

The active-site Nucleophile is Asp-54. Residue Tyr-113 coordinates substrate.

It belongs to the tRNA pseudouridine synthase TruA family. Homodimer.

It carries out the reaction uridine(38/39/40) in tRNA = pseudouridine(38/39/40) in tRNA. Formation of pseudouridine at positions 38, 39 and 40 in the anticodon stem and loop of transfer RNAs. The protein is tRNA pseudouridine synthase A of Bacteroides fragilis (strain ATCC 25285 / DSM 2151 / CCUG 4856 / JCM 11019 / LMG 10263 / NCTC 9343 / Onslow / VPI 2553 / EN-2).